The following is a 77-amino-acid chain: RNA-binding protein Hfq (77 aa).

Residues 9–68 (DPFLNALRKEHIPVAIYLVNGIKLQGQIESFDQFVILLKNTVSQMVYKHAISTVVPARAI) enclose the Sm domain.

This sequence belongs to the Hfq family. In terms of assembly, homohexamer.

In terms of biological role, RNA chaperone that binds small regulatory RNA (sRNAs) and mRNAs to facilitate mRNA translational regulation in response to envelope stress, environmental stress and changes in metabolite concentrations. Also binds with high specificity to tRNAs. In Psychromonas ingrahamii (strain DSM 17664 / CCUG 51855 / 37), this protein is RNA-binding protein Hfq.